Consider the following 97-residue polypeptide: Signal recognition particle 19 kDa protein (97 aa).

Belongs to the SRP19 family. As to quaternary structure, part of the signal recognition particle protein translocation system, which is composed of SRP and FtsY. Archaeal SRP consists of a 7S RNA molecule of 300 nucleotides and two protein subunits: SRP54 and SRP19.

The protein localises to the cytoplasm. Involved in targeting and insertion of nascent membrane proteins into the cytoplasmic membrane. Binds directly to 7S RNA and mediates binding of the 54 kDa subunit of the SRP. This is Signal recognition particle 19 kDa protein from Methanocella arvoryzae (strain DSM 22066 / NBRC 105507 / MRE50).